Reading from the N-terminus, the 235-residue chain is Ion-translocating oxidoreductase complex subunit E (235 aa).

A run of 5 helical transmembrane segments spans residues 63–83 (LGLS…ISLF), 93–113 (IPIY…LMNA), 117–137 (TLYQ…IIIG), 152–172 (IWDG…LGAL), and 206–226 (SFLL…LLAI).

It belongs to the NqrDE/RnfAE family. The complex is composed of six subunits: RnfA, RnfB, RnfC, RnfD, RnfE and RnfG.

The protein localises to the cell inner membrane. Part of a membrane-bound complex that couples electron transfer with translocation of ions across the membrane. The polypeptide is Ion-translocating oxidoreductase complex subunit E (Haemophilus influenzae (strain PittEE)).